Consider the following 756-residue polypeptide: Polyribonucleotide nucleotidyltransferase (756 aa).

Asp492 and Asp498 together coordinate Mg(2+). Residues 559–618 (PQHAEVFVNPDVIRIIIGPGGKNIKAITAATGASIDIEDSGKVSIFAPTYEAMEMAREMV) enclose the KH domain. Positions 628 to 702 (GKNYVGKVRK…SRKAVLLEEQ (75 aa)) constitute an S1 motif domain. The segment at 703–756 (GVEWNPEDTARPSGPPRDRGDRGDRGGRGDRGGDRRGGDRGGRGGDRGRGGDRR) is disordered. Positions 718–756 (PRDRGDRGDRGGRGDRGGDRRGGDRGGRGGDRGRGGDRR) are enriched in basic and acidic residues.

The protein belongs to the polyribonucleotide nucleotidyltransferase family. Mg(2+) is required as a cofactor.

It localises to the cytoplasm. It catalyses the reaction RNA(n+1) + phosphate = RNA(n) + a ribonucleoside 5'-diphosphate. Functionally, involved in mRNA degradation. Catalyzes the phosphorolysis of single-stranded polyribonucleotides processively in the 3'- to 5'-direction. The polypeptide is Polyribonucleotide nucleotidyltransferase (Nitratidesulfovibrio vulgaris (strain DSM 19637 / Miyazaki F) (Desulfovibrio vulgaris)).